We begin with the raw amino-acid sequence, 274 residues long: Large ribosomal subunit protein uL2cz/uL2cy (274 aa).

Disordered stretches follow at residues 1 to 22 (MAIH…DSQV) and 225 to 252 (PVDH…GYPA).

This sequence belongs to the universal ribosomal protein uL2 family. As to quaternary structure, part of the 50S ribosomal subunit.

It localises to the plastid. It is found in the chloroplast. The sequence is that of Large ribosomal subunit protein uL2cz/uL2cy (rpl2-A) from Barbarea verna (Land cress).